A 398-amino-acid polypeptide reads, in one-letter code: Mitochondrial protein import protein mas5 (398 aa).

A J domain is found at 7 to 88 (GYYKVLELSP…KKKKEYDSGM (82 aa)). The CR-type zinc finger occupies 139–219 (GKVSKFNVRT…CNGAEYIQDK (81 aa)). Position 144 to 146 (144 to 146 (FNV)) interacts with substrate. Zn(2+) contacts are provided by C152, C155, C166, C169, C192, C195, C207, and C210. CXXCXGXG motif repeat units lie at residues 152-159 (CTTCDGKG), 166-173 (CKKCNGNG), 192-199 (CDGCDGSG), and 207-214 (CSTCNGAE). Residues 221–222 (MF) and 253–255 (VIF) each bind substrate. Positions 367-386 (FGSMPEPERDHEDASEEGAQ) are disordered.

It belongs to the DnaJ family. Homodimer. Zn(2+) serves as cofactor.

Its subcellular location is the cytoplasm. Functionally, probably involved in mitosomal protein import. In Encephalitozoon cuniculi (strain GB-M1) (Microsporidian parasite), this protein is Mitochondrial protein import protein mas5 (MAS5).